Consider the following 212-residue polypeptide: Probable GTP-binding protein EngB (212 aa).

Residues 22–212 (GVSEFAFFGR…NILSLIAKRI (191 aa)) enclose the EngB-type G domain. GTP-binding positions include 30 to 37 (GRSNAGKS), 57 to 61 (GMTRE), 95 to 98 (DLPG), 162 to 165 (TKAD), and 192 to 195 (ISSA). The Mg(2+) site is built by S37 and T59.

It belongs to the TRAFAC class TrmE-Era-EngA-EngB-Septin-like GTPase superfamily. EngB GTPase family. Mg(2+) is required as a cofactor.

Necessary for normal cell division and for the maintenance of normal septation. The polypeptide is Probable GTP-binding protein EngB (Treponema denticola (strain ATCC 35405 / DSM 14222 / CIP 103919 / JCM 8153 / KCTC 15104)).